Consider the following 218-residue polypeptide: Peptide deformylase (218 aa).

The Fe cation site is built by Cys-130 and His-172. The active site involves Glu-173. Residue His-176 coordinates Fe cation.

The protein belongs to the polypeptide deformylase family. Fe(2+) serves as cofactor.

It catalyses the reaction N-terminal N-formyl-L-methionyl-[peptide] + H2O = N-terminal L-methionyl-[peptide] + formate. In terms of biological role, removes the formyl group from the N-terminal Met of newly synthesized proteins. Requires at least a dipeptide for an efficient rate of reaction. N-terminal L-methionine is a prerequisite for activity but the enzyme has broad specificity at other positions. This chain is Peptide deformylase, found in Bifidobacterium adolescentis (strain ATCC 15703 / DSM 20083 / NCTC 11814 / E194a).